We begin with the raw amino-acid sequence, 186 residues long: Elongation factor P (186 aa).

Belongs to the elongation factor P family.

It is found in the cytoplasm. Its pathway is protein biosynthesis; polypeptide chain elongation. Functionally, involved in peptide bond synthesis. Stimulates efficient translation and peptide-bond synthesis on native or reconstituted 70S ribosomes in vitro. Probably functions indirectly by altering the affinity of the ribosome for aminoacyl-tRNA, thus increasing their reactivity as acceptors for peptidyl transferase. This Elusimicrobium minutum (strain Pei191) protein is Elongation factor P.